The primary structure comprises 135 residues: uncharacterized protein (135 aa).

The next 2 helical transmembrane spans lie at 20 to 40 (IFSF…NTKL) and 47 to 67 (IAYF…IHGT).

Belongs to the plectrovirus ORF5 family.

The protein localises to the host membrane. This is an uncharacterized protein from Spiroplasma virus SpV1-C74 (SpV1).